The chain runs to 174 residues: Translation initiation factor IF-3 (174 aa).

This sequence belongs to the IF-3 family. In terms of assembly, monomer.

It localises to the cytoplasm. Functionally, IF-3 binds to the 30S ribosomal subunit and shifts the equilibrium between 70S ribosomes and their 50S and 30S subunits in favor of the free subunits, thus enhancing the availability of 30S subunits on which protein synthesis initiation begins. This is Translation initiation factor IF-3 from Azorhizobium caulinodans (strain ATCC 43989 / DSM 5975 / JCM 20966 / LMG 6465 / NBRC 14845 / NCIMB 13405 / ORS 571).